Consider the following 348-residue polypeptide: MNIKEALNRIVAQLDLTTEEMQAVMREIMTGQCTDAQIGAFLMGMRMKSETIDEIVGAASVMRELAAPVVIDAERLVDTCGTGGDGMNIFNVSTAAAFVVAAAGGKVAKHGNRAVSGKSGSADLLEAAGVYLGLKPEQVARCVESVGVGFMFAPSHHGAMKHAIGPRRELGLRTIFNMLGPMTNPAGARHQVIGVFSQALCRPMAEVLQRLGSEHVLVVHAQDGLDEISLAAPTFVAELKDGKVSEYRIQPEDFAIKSQSLIGLTVDNAEQSLELIRDALGRRKTENGQKAADMIVLNAGAALYAADHASSLREGVQLAHDALHTGLAREKLEELVSLTAVFKQENEG.

Residues G81, 84–85 (GD), 91–94 (NVST), 109–117 (KHGNRAVSG), and S121 each bind 5-phospho-alpha-D-ribose 1-diphosphate. G81 provides a ligand contact to anthranilate. S93 is a Mg(2+) binding site. N112 is a binding site for anthranilate. Residue R167 coordinates anthranilate. Positions 226 and 227 each coordinate Mg(2+).

It belongs to the anthranilate phosphoribosyltransferase family. In terms of assembly, homodimer. Mg(2+) is required as a cofactor.

The enzyme catalyses N-(5-phospho-beta-D-ribosyl)anthranilate + diphosphate = 5-phospho-alpha-D-ribose 1-diphosphate + anthranilate. It functions in the pathway amino-acid biosynthesis; L-tryptophan biosynthesis; L-tryptophan from chorismate: step 2/5. Functionally, catalyzes the transfer of the phosphoribosyl group of 5-phosphorylribose-1-pyrophosphate (PRPP) to anthranilate to yield N-(5'-phosphoribosyl)-anthranilate (PRA). This is Anthranilate phosphoribosyltransferase from Ectopseudomonas mendocina (strain ymp) (Pseudomonas mendocina).